Consider the following 486-residue polypeptide: Ribosomal RNA small subunit methyltransferase F (486 aa).

Residues 124-130, E148, D175, and D193 each bind S-adenosyl-L-methionine; that span reads ASAPGSK. C246 serves as the catalytic Nucleophile.

It belongs to the class I-like SAM-binding methyltransferase superfamily. RsmB/NOP family.

The protein resides in the cytoplasm. It catalyses the reaction cytidine(1407) in 16S rRNA + S-adenosyl-L-methionine = 5-methylcytidine(1407) in 16S rRNA + S-adenosyl-L-homocysteine + H(+). Specifically methylates the cytosine at position 1407 (m5C1407) of 16S rRNA. This Shewanella baltica (strain OS185) protein is Ribosomal RNA small subunit methyltransferase F.